The chain runs to 719 residues: Solute carrier organic anion transporter family member 6A1 (719 aa).

A disordered region spans residues 1 to 46; sequence MFVGVARHSGSQDEVSRGVEPLEAARAQPAKDRRAKGTPKSSKPGK. Residues 1–106 lie on the Cytoplasmic side of the membrane; sequence MFVGVARHSG…TCCECCNNIR (106 aa). Over residues 33–46 the composition is skewed to basic residues; sequence RRAKGTPKSSKPGK. Residues 107–126 form a helical membrane-spanning segment; sequence CFMIFYCILLICQGVVFGLI. At 127-145 the chain is on the extracellular side; sequence DVSIGDFQKEYQLKTIEKL. The chain crosses the membrane as a helical span at residues 146-166; the sequence is ALEKSYDISSGLVAIFIAFYG. The Cytoplasmic segment spans residues 167–171; sequence DRKKV. A helical transmembrane segment spans residues 172–196; that stretch reads IWFVASSFLIGLGSLLCAFPSINEE. At 197–223 the chain is on the extracellular side; that stretch reads NKQSKVGIEDICEEIKVVSGCQSSGIS. A helical transmembrane segment spans residues 224–254; that stretch reads FQSKYLSFFILGQTVQGIAGMPLYILGITFI. Residues 255–274 lie on the Cytoplasmic side of the membrane; it reads DENVATHSAGIYLGIAECTS. The chain crosses the membrane as a helical span at residues 275 to 295; that stretch reads MIGYALGYVLGAPLVKVPENT. The Extracellular portion of the chain corresponds to 296–311; it reads TSATNTTVNNGSPEWL. A glycan (N-linked (GlcNAc...) asparagine) is linked at Asn300. A helical membrane pass occupies residues 312 to 336; that stretch reads WTWWINFLFAAVVAWCTLIPLSCFP. The Cytoplasmic portion of the chain corresponds to 337-378; the sequence is NNMPGSTRIKARKRKQLHFFDSRLKDLKLGTNIKDLCAALWI. Residues 379–400 traverse the membrane as a helical segment; sequence LMKNPVLICLALSKATEYLVII. Topologically, residues 401 to 420 are extracellular; the sequence is GASEFLPIYLENQFILTPTV. The helical transmembrane segment at 421-444 threads the bilayer; sequence ATTLAGLVLIPGGALGQLLGGVIV. Residues 445 to 448 lie on the Cytoplasmic side of the membrane; the sequence is STLE. Residues 449-472 traverse the membrane as a helical segment; that stretch reads MSCKALMRFIMVTSVISLILLVFI. Residues 473–581 are Extracellular-facing; that stretch reads IFVRCNPVQF…DAKCYKLPLF (109 aa). In terms of domain architecture, Kazal-like spans 496 to 551; sequence GNLTAPCNEKCRCSSSIYSSICGRDDIEYFSPCFAGCTYSKAQNQKKMYYNCSCIK. Asn497 is a glycosylation site (N-linked (GlcNAc...) asparagine). Cystine bridges form between Cys502-Cys532, Cys508-Cys528, and Cys517-Cys549. Asn546 carries an N-linked (GlcNAc...) asparagine glycan. Residues 582-604 form a helical membrane-spanning segment; that stretch reads IAFIFSTLIFSGFSGVPIVLAMT. Over 605-613 the chain is Cytoplasmic; it reads RVVPDKLRS. A helical transmembrane segment spans residues 614–639; sequence LALGVSYVILRIFGTIPGPSIFKMSG. Topologically, residues 640–673 are extracellular; that stretch reads ETSCILRDVNKCGHTGRCWIYNKTKMAFLLVGIC. The N-linked (GlcNAc...) asparagine glycan is linked to Asn661. The helical transmembrane segment at 674–691 threads the bilayer; that stretch reads FLCKLCTIIFTTIAFFIY. Residues 692–719 are Cytoplasmic-facing; it reads KRRLNENTDFPDVTVKNPKVKKKEETDL.

Belongs to the organo anion transporter (TC 2.A.60) family. In terms of tissue distribution, strongly expressed in testis. Weakly expressed in spleen, brain, fetal brain and placenta. Detected in lung tumors.

It is found in the cell membrane. The chain is Solute carrier organic anion transporter family member 6A1 (SLCO6A1) from Homo sapiens (Human).